Here is a 518-residue protein sequence, read N- to C-terminus: Glutamate--cysteine ligase (518 aa).

This sequence belongs to the glutamate--cysteine ligase type 1 family. Type 1 subfamily.

It catalyses the reaction L-cysteine + L-glutamate + ATP = gamma-L-glutamyl-L-cysteine + ADP + phosphate + H(+). It participates in sulfur metabolism; glutathione biosynthesis; glutathione from L-cysteine and L-glutamate: step 1/2. The sequence is that of Glutamate--cysteine ligase from Shigella boydii serotype 4 (strain Sb227).